The sequence spans 101 residues: Urease subunit beta (101 aa).

This sequence belongs to the urease beta subunit family. Heterotrimer of UreA (gamma), UreB (beta) and UreC (alpha) subunits. Three heterotrimers associate to form the active enzyme.

The protein localises to the cytoplasm. It carries out the reaction urea + 2 H2O + H(+) = hydrogencarbonate + 2 NH4(+). It participates in nitrogen metabolism; urea degradation; CO(2) and NH(3) from urea (urease route): step 1/1. In Burkholderia pseudomallei (strain 668), this protein is Urease subunit beta.